The following is a 289-amino-acid chain: Probable endonuclease 4 (289 aa).

Positions 75, 115, 153, 187, 190, 224, 237, 239, and 269 each coordinate Zn(2+).

It belongs to the AP endonuclease 2 family. Zn(2+) is required as a cofactor.

The enzyme catalyses Endonucleolytic cleavage to 5'-phosphooligonucleotide end-products.. In terms of biological role, endonuclease IV plays a role in DNA repair. It cleaves phosphodiester bonds at apurinic or apyrimidinic (AP) sites, generating a 3'-hydroxyl group and a 5'-terminal sugar phosphate. This is Probable endonuclease 4 from Chlamydia caviae (strain ATCC VR-813 / DSM 19441 / 03DC25 / GPIC) (Chlamydophila caviae).